The chain runs to 209 residues: A-type ATP synthase subunit D (209 aa).

Belongs to the V-ATPase D subunit family. In terms of assembly, has multiple subunits with at least A(3), B(3), C, D, E, F, H, I and proteolipid K(x).

The protein resides in the cell membrane. In terms of biological role, component of the A-type ATP synthase that produces ATP from ADP in the presence of a proton gradient across the membrane. This chain is A-type ATP synthase subunit D, found in Methanosarcina acetivorans (strain ATCC 35395 / DSM 2834 / JCM 12185 / C2A).